A 120-amino-acid chain; its full sequence is MFLLYEYDFFWAFLIISILVPILAFFISGVLAPISKGPEKLSTYESGIEPMGDAWLQFRIRYYMFALVFVVFDVETVFLYPWAMSFDVLGVSVFIEAFIFVLILIIGLVYAWRKGALEWS.

3 helical membrane passes run 9-29, 64-84, and 88-108; these read FFWA…FISG, MFAL…PWAM, and VLGV…IIGL.

The protein belongs to the complex I subunit 3 family. As to quaternary structure, NDH is composed of at least 16 different subunits, 5 of which are encoded in the nucleus.

The protein resides in the plastid. It localises to the chloroplast thylakoid membrane. The enzyme catalyses a plastoquinone + NADH + (n+1) H(+)(in) = a plastoquinol + NAD(+) + n H(+)(out). It catalyses the reaction a plastoquinone + NADPH + (n+1) H(+)(in) = a plastoquinol + NADP(+) + n H(+)(out). Its function is as follows. NDH shuttles electrons from NAD(P)H:plastoquinone, via FMN and iron-sulfur (Fe-S) centers, to quinones in the photosynthetic chain and possibly in a chloroplast respiratory chain. The immediate electron acceptor for the enzyme in this species is believed to be plastoquinone. Couples the redox reaction to proton translocation, and thus conserves the redox energy in a proton gradient. The sequence is that of NAD(P)H-quinone oxidoreductase subunit 3, chloroplastic from Atropa belladonna (Belladonna).